Here is a 156-residue protein sequence, read N- to C-terminus: 6,7-dimethyl-8-ribityllumazine synthase (156 aa).

5-amino-6-(D-ribitylamino)uracil contacts are provided by residues F22, 57–59 (AYE), and 81–83 (TVI). 86 to 87 (GT) contributes to the (2S)-2-hydroxy-3-oxobutyl phosphate binding site. The active-site Proton donor is the H89. F114 contributes to the 5-amino-6-(D-ribitylamino)uracil binding site. Position 128 (R128) interacts with (2S)-2-hydroxy-3-oxobutyl phosphate.

Belongs to the DMRL synthase family. Forms an icosahedral capsid composed of 60 subunits, arranged as a dodecamer of pentamers.

It carries out the reaction (2S)-2-hydroxy-3-oxobutyl phosphate + 5-amino-6-(D-ribitylamino)uracil = 6,7-dimethyl-8-(1-D-ribityl)lumazine + phosphate + 2 H2O + H(+). Its pathway is cofactor biosynthesis; riboflavin biosynthesis; riboflavin from 2-hydroxy-3-oxobutyl phosphate and 5-amino-6-(D-ribitylamino)uracil: step 1/2. In terms of biological role, catalyzes the formation of 6,7-dimethyl-8-ribityllumazine by condensation of 5-amino-6-(D-ribitylamino)uracil with 3,4-dihydroxy-2-butanone 4-phosphate. This is the penultimate step in the biosynthesis of riboflavin. This Escherichia coli O45:K1 (strain S88 / ExPEC) protein is 6,7-dimethyl-8-ribityllumazine synthase.